A 39-amino-acid polypeptide reads, in one-letter code: uncharacterized protein (39 aa).

An N-terminal signal peptide occupies residues 1-21 (MHLRSRWWLALLYCKDPVSRS).

This is an uncharacterized protein from Saccharomyces cerevisiae (strain ATCC 204508 / S288c) (Baker's yeast).